The primary structure comprises 513 residues: cAMP-regulated M3R protein (513 aa).

The protein to D.discoideum protein M3L.

This Dictyostelium discoideum (Social amoeba) protein is cAMP-regulated M3R protein (prtB).